A 471-amino-acid chain; its full sequence is ATP synthase subunit beta (471 aa).

ATP is bound at residue 153–160 (GGAGVGKT).

Belongs to the ATPase alpha/beta chains family. As to quaternary structure, F-type ATPases have 2 components, CF(1) - the catalytic core - and CF(0) - the membrane proton channel. CF(1) has five subunits: alpha(3), beta(3), gamma(1), delta(1), epsilon(1). CF(0) has three main subunits: a(1), b(2) and c(9-12). The alpha and beta chains form an alternating ring which encloses part of the gamma chain. CF(1) is attached to CF(0) by a central stalk formed by the gamma and epsilon chains, while a peripheral stalk is formed by the delta and b chains.

It localises to the cell membrane. It carries out the reaction ATP + H2O + 4 H(+)(in) = ADP + phosphate + 5 H(+)(out). Its function is as follows. Produces ATP from ADP in the presence of a proton gradient across the membrane. The catalytic sites are hosted primarily by the beta subunits. This Levilactobacillus brevis (strain ATCC 367 / BCRC 12310 / CIP 105137 / JCM 1170 / LMG 11437 / NCIMB 947 / NCTC 947) (Lactobacillus brevis) protein is ATP synthase subunit beta.